Reading from the N-terminus, the 429-residue chain is Adenylosuccinate synthetase (429 aa).

Residues 12 to 18 (GDEGKGK) and 40 to 42 (GHT) contribute to the GTP site. Asp13 acts as the Proton acceptor in catalysis. Mg(2+) contacts are provided by Asp13 and Gly40. IMP-binding positions include 13-16 (DEGK), 38-41 (NAGH), Thr129, Arg143, Gln223, Thr238, and Arg302. The Proton donor role is filled by His41. 298–304 (TVTGRAR) is a substrate binding site. GTP contacts are provided by residues Arg304, 330-332 (KLD), and 412-414 (STS).

The protein belongs to the adenylosuccinate synthetase family. As to quaternary structure, homodimer. Mg(2+) is required as a cofactor.

Its subcellular location is the cytoplasm. The catalysed reaction is IMP + L-aspartate + GTP = N(6)-(1,2-dicarboxyethyl)-AMP + GDP + phosphate + 2 H(+). Its pathway is purine metabolism; AMP biosynthesis via de novo pathway; AMP from IMP: step 1/2. In terms of biological role, plays an important role in the de novo pathway of purine nucleotide biosynthesis. Catalyzes the first committed step in the biosynthesis of AMP from IMP. The chain is Adenylosuccinate synthetase from Acidiphilium cryptum (strain JF-5).